The chain runs to 638 residues: Probable lysine-specific demethylase 4F (638 aa).

Residues 15–57 (IMTFYPTMEEFADFNTYVAYMESQGAHRAGLAKVIPPKEWKAR) enclose the JmjN domain. 2-oxoglutarate is bound at residue Tyr-133. Residues 143–309 (EESTKQWNLG…YGKVASQCSC (167 aa)) form the JmjC domain. The Fe cation site is built by His-189 and Glu-191. Positions 199 and 207 each coordinate 2-oxoglutarate. Cys-235 and His-241 together coordinate Zn(2+). Lys-242 lines the 2-oxoglutarate pocket. His-277 contributes to the Fe cation binding site. 2 residues coordinate Zn(2+): Cys-307 and Cys-309. Residues 426 to 474 (PCRGCGRGRGRGRGRGRRPRELGTEETTVQSAAKRRLSVGTGSRAPGRK) form a disordered region. A compositionally biased stretch (basic residues) spans 431–443 (GRGRGRGRGRGRR).

Belongs to the JHDM3 histone demethylase family. It depends on Fe(2+) as a cofactor.

It is found in the nucleus. It catalyses the reaction N(6),N(6),N(6)-trimethyl-L-lysyl(9)-[histone H3] + 2 2-oxoglutarate + 2 O2 = N(6)-methyl-L-lysyl(9)-[histone H3] + 2 formaldehyde + 2 succinate + 2 CO2. In terms of biological role, probable histone demethylase that specifically demethylates 'Lys-9' of histone H3, thereby playing a central role in histone code. In Homo sapiens (Human), this protein is Probable lysine-specific demethylase 4F.